Consider the following 443-residue polypeptide: DNA double-strand break repair protein Mre11 (443 aa).

Mn(2+) contacts are provided by Asp-8, His-10, Asp-49, and Asn-84. The active-site Proton donor is His-85. His-169, His-201, and His-203 together coordinate Mn(2+). The segment at 382-429 (QEEGAEERVVEEETEKKVEEQFKGDEEADEAERRAEETEKAKSTKKAR) is disordered. The span at 395–423 (TEKKVEEQFKGDEEADEAERRAEETEKAK) shows a compositional bias: basic and acidic residues.

It belongs to the MRE11/RAD32 family. As to quaternary structure, homodimer. Forms a heterotetramer composed of two Mre11 subunits and two Rad50 subunits. The cofactor is Mn(2+).

With respect to regulation, nuclease activity is regulated by Rad50. Part of the Rad50/Mre11 complex, which is involved in the early steps of DNA double-strand break (DSB) repair. The complex may facilitate opening of the processed DNA ends to aid in the recruitment of HerA and NurA. Mre11 binds to DSB ends and has both double-stranded 3'-5' exonuclease activity and single-stranded endonuclease activity. The protein is DNA double-strand break repair protein Mre11 of Archaeoglobus fulgidus (strain ATCC 49558 / DSM 4304 / JCM 9628 / NBRC 100126 / VC-16).